The sequence spans 370 residues: Ubiquitin carboxyl-terminal hydrolase 12 (370 aa).

The Required for plasma membrane localization of USP12/WDR20 motif lies at 1 to 4 (MEIL). One can recognise a USP domain in the interval 39–369 (FGLVNFGNTC…SGYILFYQSR (331 aa)). Cys48 functions as the Nucleophile in the catalytic mechanism. The segment covering 146–157 (QEKQNGRLRNGD) has biased composition (basic and acidic residues). The interval 146–168 (QEKQNGRLRNGDVDNEDNNSTPD) is disordered. Zn(2+) is bound by residues Cys186, Cys189, Cys233, and Cys236. The active-site Proton acceptor is His317.

It belongs to the peptidase C19 family. USP12/USP46 subfamily. As to quaternary structure, interacts with WDR48. Interacts with WDR20; this interaction promotes translocation of the USP12 complex to the plasma membrane. Component of the USP12/WDR20/WDR48 deubiquitinating complex. Component of the USP12/DMWD/WDR48 deubiquitinating complex. Interacts with PHLPP1. Interacts with RBPJ. Interacts with CBP; this interaction blocks the acetyltransferase activity of CREBBP.

Its subcellular location is the nucleus. It is found in the cytoplasm. It localises to the cell membrane. It carries out the reaction Thiol-dependent hydrolysis of ester, thioester, amide, peptide and isopeptide bonds formed by the C-terminal Gly of ubiquitin (a 76-residue protein attached to proteins as an intracellular targeting signal).. Its activity is regulated as follows. Activated by interaction with WDR20; WDR48 and DMWD through different allosteric mechanisms. Its function is as follows. Deubiquitinating enzyme that plays various roles in the regulation of the immune response and inflammation. During TCR engagement and activation, translocates into the cytoplasm and deubiquitinates its substrates LAT and TRAT1 and prevents their lysosome-dependent degradation to stabilize the TCR signaling complex at the plasma membrane. Plays an essential role in the selective LPS-induced macrophage response through the activation of NF-kappa-B pathway. In addition, promotes that antiviral immune response through targeting DNA sensor IFI16 to inhibit its proteasome-dependent degradation. Participates in the interferon signaling pathway and antiviral response independently of its deubiquitinase activity by maintaining nuclear phosphorylated STAT1 levels via inhibition of its CREBBP-mediated acetylation and subsequent dephosphorylation. Plays an intrinsic role in promoting the differentiation, activation and proliferation of CD4(+) T-cell by activating the NF-kappa-B signaling pathway through deubiquitinating and stabilizing B-cell lymphoma/leukemia 10/BCL10. In myeloid-derived suppressor cells promotes the activation of the NF-kappa-B via deubiquitination and stabilization of RELA. Regulates the 'Lys-63'-linked polyubiquitin chains of BAX and thereby modulates the mitochondrial apoptotic process. Negative regulator of NOTCH signaling that specifically deubiquitinates non-activated NOTCH receptors to target them for lysosomal degradation; deubiquitination of NOTCH stimulates its transport form late endosomes to lysosomes. Protects neurons against HTT/huntingtin-induced polyglutamine expansion-dependent neurodegeneration through regulation of autophagic flux. This function is independent of deubiquitinase activity or of other components of the USP12-WDR20-WDR48 deubiquitinating complex. In complex with WDR48, acts as a potential tumor suppressor by positively regulating PHLPP1 stability. The polypeptide is Ubiquitin carboxyl-terminal hydrolase 12 (Usp12) (Mus musculus (Mouse)).